The primary structure comprises 212 residues: Large ribosomal subunit protein uL3 (212 aa).

The segment at 127 to 161 (NFKRGPMAHGSKNHRLPGSTGAGTTPGRVFPGKRM) is disordered.

The protein belongs to the universal ribosomal protein uL3 family. In terms of assembly, part of the 50S ribosomal subunit. Forms a cluster with proteins L14 and L19.

Its function is as follows. One of the primary rRNA binding proteins, it binds directly near the 3'-end of the 23S rRNA, where it nucleates assembly of the 50S subunit. The chain is Large ribosomal subunit protein uL3 from Thermosynechococcus vestitus (strain NIES-2133 / IAM M-273 / BP-1).